The sequence spans 255 residues: MILVTNDDGYNSYGIRVLYRAAASIAESYIVAPDHGRSATGMSTTYNVPLRAFKFDYGYAISGFPADSVYMARYALYNDKKIDLIVSGINHGDNISLRSLYSSGTIGATMAGALIGIKGIAFSMSYNGISNEKIDLAEPYIKAIIENAMERFPDDVDILNVNFPGNLNRNTRILPARMSYNIFDDNIIKRLDPNGHEYYWFGNKRHERCPENCDYDVVYRKNSISITPITVKGYLDDLRSTEEFISFINVKELLG.

A divalent metal cation is bound by residues Asp7, Asp8, Ser38, and Asn90.

Belongs to the SurE nucleotidase family. The cofactor is a divalent metal cation.

It localises to the cytoplasm. It carries out the reaction a ribonucleoside 5'-phosphate + H2O = a ribonucleoside + phosphate. In terms of biological role, nucleotidase that shows phosphatase activity on nucleoside 5'-monophosphates. This is 5'-nucleotidase SurE from Picrophilus torridus (strain ATCC 700027 / DSM 9790 / JCM 10055 / NBRC 100828 / KAW 2/3).